Consider the following 326-residue polypeptide: MIERIWSGRNALYLLLLPFSLFYGLISNFTRLSYRWGWRKAWRAPVPVVVVGNLTAGGNGKTPVVIWLVQALQQRGLRVGVVSRGYGGKAEYYPLVLGPKTTTDEAGDEPVLIYQRTGATVAVAPVRAQAVKAVLRSAAVDIIITDDGLQHYALARDIEIVVIDGERRFGNGWWLPAGPMRERAARLQSVTAIVTNGGKALPGEMAMRLTPGLAVNLKTGERRPVTELDNIVAMAGIGHPPRFFNTLRQLGVTPLRQVAFADHQHYSAESLYSLTSSGQTLLMTEKDAVKASAFAADNWWYLPVDASLPTAEAEALLATITATSAG.

55–62 contributes to the ATP binding site; that stretch reads TAGGNGKT.

Belongs to the LpxK family.

The enzyme catalyses a lipid A disaccharide + ATP = a lipid IVA + ADP + H(+). Its pathway is glycolipid biosynthesis; lipid IV(A) biosynthesis; lipid IV(A) from (3R)-3-hydroxytetradecanoyl-[acyl-carrier-protein] and UDP-N-acetyl-alpha-D-glucosamine: step 6/6. Functionally, transfers the gamma-phosphate of ATP to the 4'-position of a tetraacyldisaccharide 1-phosphate intermediate (termed DS-1-P) to form tetraacyldisaccharide 1,4'-bis-phosphate (lipid IVA). In Erwinia tasmaniensis (strain DSM 17950 / CFBP 7177 / CIP 109463 / NCPPB 4357 / Et1/99), this protein is Tetraacyldisaccharide 4'-kinase.